A 251-amino-acid chain; its full sequence is 3-deoxy-manno-octulosonate cytidylyltransferase (251 aa).

Belongs to the KdsB family.

The protein resides in the cytoplasm. The enzyme catalyses 3-deoxy-alpha-D-manno-oct-2-ulosonate + CTP = CMP-3-deoxy-beta-D-manno-octulosonate + diphosphate. It participates in nucleotide-sugar biosynthesis; CMP-3-deoxy-D-manno-octulosonate biosynthesis; CMP-3-deoxy-D-manno-octulosonate from 3-deoxy-D-manno-octulosonate and CTP: step 1/1. The protein operates within bacterial outer membrane biogenesis; lipopolysaccharide biosynthesis. Activates KDO (a required 8-carbon sugar) for incorporation into bacterial lipopolysaccharide in Gram-negative bacteria. The chain is 3-deoxy-manno-octulosonate cytidylyltransferase from Rhizobium leguminosarum bv. trifolii (strain WSM2304).